Here is a 140-residue protein sequence, read N- to C-terminus: Putative pre-16S rRNA nuclease (140 aa).

The protein belongs to the YqgF nuclease family.

Its subcellular location is the cytoplasm. In terms of biological role, could be a nuclease involved in processing of the 5'-end of pre-16S rRNA. This is Putative pre-16S rRNA nuclease from Halalkalibacterium halodurans (strain ATCC BAA-125 / DSM 18197 / FERM 7344 / JCM 9153 / C-125) (Bacillus halodurans).